Consider the following 267-residue polypeptide: Formamidopyrimidine-DNA glycosylase (267 aa).

The Schiff-base intermediate with DNA role is filled by P2. Catalysis depends on E3, which acts as the Proton donor. K58 functions as the Proton donor; for beta-elimination activity in the catalytic mechanism. The DNA site is built by H91, R110, and R152. The FPG-type zinc-finger motif lies at 233-267 (DVYGRGTDACTRCGGALEEIRLGNRSTVFCPRCQT). The active-site Proton donor; for delta-elimination activity is the R257.

Belongs to the FPG family. Monomer. It depends on Zn(2+) as a cofactor.

The catalysed reaction is Hydrolysis of DNA containing ring-opened 7-methylguanine residues, releasing 2,6-diamino-4-hydroxy-5-(N-methyl)formamidopyrimidine.. The enzyme catalyses 2'-deoxyribonucleotide-(2'-deoxyribose 5'-phosphate)-2'-deoxyribonucleotide-DNA = a 3'-end 2'-deoxyribonucleotide-(2,3-dehydro-2,3-deoxyribose 5'-phosphate)-DNA + a 5'-end 5'-phospho-2'-deoxyribonucleoside-DNA + H(+). In terms of biological role, involved in base excision repair of DNA damaged by oxidation or by mutagenic agents. Acts as a DNA glycosylase that recognizes and removes damaged bases. Has a preference for oxidized purines, such as 7,8-dihydro-8-oxoguanine (8-oxoG). Has AP (apurinic/apyrimidinic) lyase activity and introduces nicks in the DNA strand. Cleaves the DNA backbone by beta-delta elimination to generate a single-strand break at the site of the removed base with both 3'- and 5'-phosphates. This Geobacter metallireducens (strain ATCC 53774 / DSM 7210 / GS-15) protein is Formamidopyrimidine-DNA glycosylase.